Consider the following 358-residue polypeptide: MVRSMRSRVAARAVAWALAVMPLAGAAGLTMAASPAAVAADTYAATRYPVILVHGLAGTDKFANVVDYWYGIQSDLQSHGAKVYVANLSGFQSDDGPNGRGEQLLAYVKQVLAATGATKVNLIGHSQGGLTSRYVAAVAPQLVASVTTIGTPHRGSEFADFVQDVLKTDPTGLSSTVIAAFVNVFGTLVSSSHNTDQDALAALRTLTTAQTATYNRNFPSAGLGAPGSCQTGAATETVGGSQHLLYSWGGTAIQPTSTVLGVTGATDTSTGTLDVANVTDPSTLALLATGAVMINRASGQNDGLVSRCSSLFGQVISTSYHWNHLDEINQLLGVRGANAEDPVAVIRTHVNRLKLQGV.

A signal peptide spans 1–39 (MVRSMRSRVAARAVAWALAVMPLAGAAGLTMAASPAAVA). In terms of domain architecture, AB hydrolase-1 spans 48-327 (YPVILVHGLA…TSYHWNHLDE (280 aa)). Leucine 56 contributes to the substrate binding site. The active-site Nucleophile is serine 126. Glutamine 127 contributes to the substrate binding site. A disulfide bridge connects residues cysteine 229 and cysteine 308. Position 280 (aspartate 280) interacts with Ca(2+). Active-site charge relay system residues include aspartate 302 and histidine 324. Ca(2+) is bound by residues aspartate 326, glutamine 330, and valine 334.

Belongs to the AB hydrolase superfamily. Pseudomonas lipase family. As to quaternary structure, monomer. Interacts with lipase-specific foldase Lif. It depends on Ca(2+) as a cofactor.

The protein localises to the secreted. It carries out the reaction a triacylglycerol + H2O = a diacylglycerol + a fatty acid + H(+). Its function is as follows. Catalyzes the hydrolysis of triacylglycerol. The chain is Triacylglycerol lipase from Burkholderia plantarii.